The primary structure comprises 71 residues: Small ribosomal subunit protein bS18 (71 aa).

The protein belongs to the bacterial ribosomal protein bS18 family. As to quaternary structure, part of the 30S ribosomal subunit. Forms a tight heterodimer with protein bS6.

Binds as a heterodimer with protein bS6 to the central domain of the 16S rRNA, where it helps stabilize the platform of the 30S subunit. The chain is Small ribosomal subunit protein bS18 from Acaryochloris marina (strain MBIC 11017).